Consider the following 445-residue polypeptide: tRNA modification GTPase MnmE (445 aa).

(6S)-5-formyl-5,6,7,8-tetrahydrofolate is bound by residues Arg-21, Glu-78, and Lys-117. The TrmE-type G domain maps to 213–370 (GFRIALVGAP…LKETLSERVV (158 aa)). Residues 223–228 (NAGKST), 242–248 (TATPGTT), and 267–270 (DTAG) each bind GTP. Ser-227 and Thr-248 together coordinate Mg(2+). Lys-445 is a (6S)-5-formyl-5,6,7,8-tetrahydrofolate binding site.

Belongs to the TRAFAC class TrmE-Era-EngA-EngB-Septin-like GTPase superfamily. TrmE GTPase family. In terms of assembly, homodimer. Heterotetramer of two MnmE and two MnmG subunits. K(+) serves as cofactor.

It localises to the cytoplasm. Its function is as follows. Exhibits a very high intrinsic GTPase hydrolysis rate. Involved in the addition of a carboxymethylaminomethyl (cmnm) group at the wobble position (U34) of certain tRNAs, forming tRNA-cmnm(5)s(2)U34. The chain is tRNA modification GTPase MnmE from Phenylobacterium zucineum (strain HLK1).